A 172-amino-acid chain; its full sequence is uncharacterized protein (172 aa).

The N-acetyltransferase domain maps to 12–172; that stretch reads IRLRCMEDRD…IAVYERKSYN (161 aa).

This is an uncharacterized protein from Bacillus subtilis (strain 168).